We begin with the raw amino-acid sequence, 101 residues long: Large ribosomal subunit protein bL27 (101 aa).

Positions 1-21 are disordered; that stretch reads MAHKKAGGSSRNGRDSRSKRL.

It belongs to the bacterial ribosomal protein bL27 family.

The polypeptide is Large ribosomal subunit protein bL27 (Buchnera aphidicola subsp. Cinara cedri (strain Cc)).